Reading from the N-terminus, the 765-residue chain is MQTPEAGADSTVSTVPLQTSVPVQPAVSGQQVASQVPVQQQAQTVQQVQHVYQAQVQYVQEENNSVYTNGTIRAYSYSEPQLYNQNSSGNYFDTQGGGGSAAQVSTVVSTHSMANNGNGTGALAMGLTGGQIISSSGAYLIGGNSMDGSAPHGAAQTTRASPATIEMAIETLQKSEGLSSQRSSLLNSHLQWLLDNYETAEGVSLPRSTLYNHYLRHCQEQKLDPVNAASFGKLIRSIFMGLRTRRLGTRGNSKYHYYGIRVKPDSPLNRLQEDMQYMALRQQPVQQKQRFKPVQKMDGVSGDNFSSAGQHTPSAAEQTFIAQSQHHQQFLDGSRALPEFVELDLGEAVDGVGPEDVKALQTLYREHCEAILDVVVNLQFNLIENLWQTFWRYSASSSVEGVTITENSGLSEIEGRLPRARLILLCRHEAVHKWMNTCDHLMYQALVEILIPDVLRPIPSALTQAIRNFAKSLEGWLTNAMSSIPPRMINTKVSAVSAFAQTLRRYTSLNHLAQAARAVLQNTSQINQMLSDLNRVDFANVQEQASWVCQCEEGVVQRLEQDFKATLQQQSSLEQWAAWLDNVVTQILKPYEDKPTLPKAARQFLLKWSFYSSMVIRDLTLRSAASFGSFHLIRLLYDEYMFYLVEHRVAQATGETAIGVMGEFQDLNTMSPANIDKDEVSEMDSDLDEEMEEADEPLAKREKVEADVIQVLQVGAMEDGSSAVVGIVQPSMINSLPPTTNNHSEHILSTGTSTIRHVGNTYASV.

Positions histidine 189–proline 264 form a DNA-binding region, RFX-type winged-helix.

It belongs to the RFX family.

The protein localises to the nucleus. In terms of biological role, transcription factor required for ciliogenesis and islet cell differentiation during endocrine pancreas development. The sequence is that of Transcription factor RFX3 (rfx3) from Danio rerio (Zebrafish).